A 159-amino-acid polypeptide reads, in one-letter code: Endoribonuclease YbeY (159 aa).

Positions 125, 129, and 135 each coordinate Zn(2+).

This sequence belongs to the endoribonuclease YbeY family. Zn(2+) serves as cofactor.

It localises to the cytoplasm. Functionally, single strand-specific metallo-endoribonuclease involved in late-stage 70S ribosome quality control and in maturation of the 3' terminus of the 16S rRNA. The polypeptide is Endoribonuclease YbeY (Lactiplantibacillus plantarum (strain ATCC BAA-793 / NCIMB 8826 / WCFS1) (Lactobacillus plantarum)).